Reading from the N-terminus, the 270-residue chain is Acetyl-coenzyme A carboxylase carboxyl transferase subunit beta (270 aa).

A CoA carboxyltransferase N-terminal domain is found at 16-270 (LFAKCPACKH…KLLAFHGGSK (255 aa)). Zn(2+) contacts are provided by Cys20, Cys23, Cys38, and Cys41. The C4-type zinc finger occupies 20-41 (CPACKHMIYQKDLGLEKICPKC).

The protein belongs to the AccD/PCCB family. Acetyl-CoA carboxylase is a heterohexamer composed of biotin carboxyl carrier protein (AccB), biotin carboxylase (AccC) and two subunits each of ACCase subunit alpha (AccA) and ACCase subunit beta (AccD). Zn(2+) serves as cofactor.

It is found in the cytoplasm. It catalyses the reaction N(6)-carboxybiotinyl-L-lysyl-[protein] + acetyl-CoA = N(6)-biotinyl-L-lysyl-[protein] + malonyl-CoA. Its pathway is lipid metabolism; malonyl-CoA biosynthesis; malonyl-CoA from acetyl-CoA: step 1/1. Its function is as follows. Component of the acetyl coenzyme A carboxylase (ACC) complex. Biotin carboxylase (BC) catalyzes the carboxylation of biotin on its carrier protein (BCCP) and then the CO(2) group is transferred by the transcarboxylase to acetyl-CoA to form malonyl-CoA. The chain is Acetyl-coenzyme A carboxylase carboxyl transferase subunit beta from Streptococcus mutans serotype c (strain NN2025).